Here is a 408-residue protein sequence, read N- to C-terminus: Argininosuccinate synthase (408 aa).

Residues 14–22 and A41 contribute to the ATP site; that span reads AYSGGLDTS. L-citrulline-binding residues include Y92 and S97. G122 lines the ATP pocket. Positions 124, 128, and 129 each coordinate L-aspartate. N128 contributes to the L-citrulline binding site. L-citrulline is bound by residues R132, S181, S190, E266, and Y278.

The protein belongs to the argininosuccinate synthase family. Type 1 subfamily. In terms of assembly, homotetramer.

The protein resides in the cytoplasm. The catalysed reaction is L-citrulline + L-aspartate + ATP = 2-(N(omega)-L-arginino)succinate + AMP + diphosphate + H(+). It functions in the pathway amino-acid biosynthesis; L-arginine biosynthesis; L-arginine from L-ornithine and carbamoyl phosphate: step 2/3. This Pelobacter propionicus (strain DSM 2379 / NBRC 103807 / OttBd1) protein is Argininosuccinate synthase.